Consider the following 141-residue polypeptide: Nucleoside diphosphate kinase (141 aa).

ATP-binding residues include K11, F59, R87, T93, R104, and N114. The active-site Pros-phosphohistidine intermediate is H117.

The protein belongs to the NDK family. As to quaternary structure, homotetramer. Mg(2+) is required as a cofactor.

It is found in the cytoplasm. It catalyses the reaction a 2'-deoxyribonucleoside 5'-diphosphate + ATP = a 2'-deoxyribonucleoside 5'-triphosphate + ADP. It carries out the reaction a ribonucleoside 5'-diphosphate + ATP = a ribonucleoside 5'-triphosphate + ADP. Its function is as follows. Major role in the synthesis of nucleoside triphosphates other than ATP. The ATP gamma phosphate is transferred to the NDP beta phosphate via a ping-pong mechanism, using a phosphorylated active-site intermediate. This is Nucleoside diphosphate kinase from Polynucleobacter necessarius subsp. necessarius (strain STIR1).